Here is a 142-residue protein sequence, read N- to C-terminus: Large ribosomal subunit protein uL11 (142 aa).

It belongs to the universal ribosomal protein uL11 family. As to quaternary structure, part of the ribosomal stalk of the 50S ribosomal subunit. Interacts with L10 and the large rRNA to form the base of the stalk. L10 forms an elongated spine to which L12 dimers bind in a sequential fashion forming a multimeric L10(L12)X complex. Post-translationally, one or more lysine residues are methylated.

Forms part of the ribosomal stalk which helps the ribosome interact with GTP-bound translation factors. This is Large ribosomal subunit protein uL11 from Bradyrhizobium sp. (strain BTAi1 / ATCC BAA-1182).